The primary structure comprises 746 residues: NAD(P)H-quinone oxidoreductase subunit 5, chloroplastic (746 aa).

16 helical membrane passes run 9-29 (WIIP…LLLF), 40-60 (WTFL…YLSI), 89-109 (IDPL…LVLI), 125-145 (FAYM…SNLI), 147-167 (VYFF…FWFT), 185-205 (GDFG…SFEF), 221-241 (VNFL…IAKS), 258-278 (TPIS…FLVA), 280-300 (LLPL…IGII), 327-347 (LGYM…FHLI), 354-374 (ALLF…VGYS), 396-416 (TAFL…CFWS), 425-445 (LLFS…TAFY), 547-567 (ILFP…IGIP), 608-628 (FSVS…KPFY), and 723-743 (YLFL…FFYF).

This sequence belongs to the complex I subunit 5 family. NDH is composed of at least 16 different subunits, 5 of which are encoded in the nucleus.

Its subcellular location is the plastid. It is found in the chloroplast thylakoid membrane. It carries out the reaction a plastoquinone + NADH + (n+1) H(+)(in) = a plastoquinol + NAD(+) + n H(+)(out). The catalysed reaction is a plastoquinone + NADPH + (n+1) H(+)(in) = a plastoquinol + NADP(+) + n H(+)(out). In terms of biological role, NDH shuttles electrons from NAD(P)H:plastoquinone, via FMN and iron-sulfur (Fe-S) centers, to quinones in the photosynthetic chain and possibly in a chloroplast respiratory chain. The immediate electron acceptor for the enzyme in this species is believed to be plastoquinone. Couples the redox reaction to proton translocation, and thus conserves the redox energy in a proton gradient. The chain is NAD(P)H-quinone oxidoreductase subunit 5, chloroplastic (ndhF) from Barbarea verna (Land cress).